The primary structure comprises 360 residues: Photosystem II protein D1 1 (360 aa).

Residues 2-31 (TTTLQRRESANLWERFCNWVTSTDNRLYVG) are Cytoplasmic-facing. A helical membrane pass occupies residues 32-53 (WFGVIMIPTLLAATICFVIAFI). At 54–110 (AAPPVDIDGIREPVSGSLLYGNNIITGAVVPSSNAIGLHFYPIWEAASLDEWLYNGG) the chain is on the lumenal side. The chain crosses the membrane as a helical span at residues 111-132 (PYQLIIFHFLLGASCYMGRQWE). Position 118 (histidine 118) interacts with chlorophyll a. Pheophytin a is bound by residues tyrosine 126 and glutamine 130. The Cytoplasmic portion of the chain corresponds to 133 to 142 (LSYRLGMRPW). A helical membrane pass occupies residues 143–163 (ICVAYSAPLASAFAVFLIYPI). Tyrosine 147 contacts pheophytin a. Topologically, residues 164-191 (GQGSFSDGMPLGISGTFNFMIVFQAEHN) are lumenal. Residues aspartate 170 and glutamate 189 each contribute to the [CaMn4O5] cluster site. The helical transmembrane segment at 192-217 (ILMHPFHQLGVAGVFGGALFCAMHGS) threads the bilayer. Position 198 (histidine 198) interacts with chlorophyll a. A quinone-binding positions include histidine 215 and 264 to 265 (SF). Residue histidine 215 participates in Fe cation binding. The Cytoplasmic segment spans residues 218-272 (LVTSSLIRETTETESANYGYKFGQEEETYNIVAAHGYFGRLIFQYASFNNSRSLH). Histidine 272 lines the Fe cation pocket. Residues 273-295 (FFLAAWPVVGVWFTALGISTMAF) form a helical membrane-spanning segment. The Lumenal portion of the chain corresponds to 296-344 (NLNGFNFNHSVIDAKGNVINTWADIINRANLGMEVMHERNAHNFPLDLA). [CaMn4O5] cluster is bound by residues histidine 332, glutamate 333, aspartate 342, and alanine 344. The propeptide occupies 345-360 (SAESAPVAMIAPSING).

The protein belongs to the reaction center PufL/M/PsbA/D family. PSII is composed of 1 copy each of membrane proteins PsbA, PsbB, PsbC, PsbD, PsbE, PsbF, PsbH, PsbI, PsbJ, PsbK, PsbL, PsbM, PsbT, PsbX, PsbY, PsbZ, Psb30/Ycf12, peripheral proteins PsbO, CyanoQ (PsbQ), PsbU, PsbV and a large number of cofactors. It forms dimeric complexes. Precursor protein interacts with Ycf48. Part of a photosystem II (PSII) assembly intermediate complex PSII-I; crystallized from a strain deleted of psbJ, it forms monomeric PSII before addition of the oxygen evolving complex. PSII-I includes 3 assembly factors not found in mature PSII (Psb27, Psb28 and Psb34). In PSII-I the C-terminus of D1 (this subunit) is already processed but not yet found at its final position. Requires The D1/D2 heterodimer binds P680, chlorophylls that are the primary electron donor of PSII, and subsequent electron acceptors. It shares a non-heme iron and each subunit binds pheophytin, quinone, additional chlorophylls, carotenoids and lipids. D1 provides most of the ligands for the Mn4-Ca-O5 cluster of the oxygen-evolving complex (OEC). There is also a Cl(-1) ion associated with D1 and D2, which is required for oxygen evolution. PSII binds additional chlorophylls, carotenoids and specific lipids. as cofactor. C-terminally processed by CtpA; processing is essential to allow assembly of the oxygen-evolving complex and thus photosynthetic growth. In terms of processing, tyr-161 forms a radical intermediate that is referred to as redox-active TyrZ, YZ or Y-Z.

Its subcellular location is the cellular thylakoid membrane. It catalyses the reaction 2 a plastoquinone + 4 hnu + 2 H2O = 2 a plastoquinol + O2. In terms of biological role, photosystem II (PSII) is a light-driven water:plastoquinone oxidoreductase that uses light energy to abstract electrons from H(2)O, generating O(2) and a proton gradient subsequently used for ATP formation. It consists of a core antenna complex that captures photons, and an electron transfer chain that converts photonic excitation into a charge separation. The D1/D2 (PsbA/PsbD) reaction center heterodimer binds P680, the primary electron donor of PSII as well as several subsequent electron acceptors. In Thermosynechococcus vestitus (strain NIES-2133 / IAM M-273 / BP-1), this protein is Photosystem II protein D1 1.